Here is a 142-residue protein sequence, read N- to C-terminus: Peptide methionine sulfoxide reductase MsrB (142 aa).

The region spanning glutamate 13–glutamate 135 is the MsrB domain. Zn(2+)-binding residues include cysteine 52, cysteine 55, cysteine 101, and cysteine 104. Cysteine 124 functions as the Nucleophile in the catalytic mechanism.

Belongs to the MsrB Met sulfoxide reductase family. Zn(2+) serves as cofactor.

It carries out the reaction L-methionyl-[protein] + [thioredoxin]-disulfide + H2O = L-methionyl-(R)-S-oxide-[protein] + [thioredoxin]-dithiol. The protein is Peptide methionine sulfoxide reductase MsrB of Alteromonas mediterranea (strain DSM 17117 / CIP 110805 / LMG 28347 / Deep ecotype).